The following is a 256-amino-acid chain: DNA repair protein RecO (256 aa).

The protein belongs to the RecO family.

In terms of biological role, involved in DNA repair and RecF pathway recombination. The sequence is that of DNA repair protein RecO from Anaeromyxobacter sp. (strain Fw109-5).